The primary structure comprises 160 residues: Transcription elongation factor GreA (160 aa).

Residues 14–76 adopt a coiled-coil conformation; the sequence is VKKLEEELEY…QLENMLKNAS (63 aa).

The protein belongs to the GreA/GreB family.

Its function is as follows. Necessary for efficient RNA polymerase transcription elongation past template-encoded arresting sites. The arresting sites in DNA have the property of trapping a certain fraction of elongating RNA polymerases that pass through, resulting in locked ternary complexes. Cleavage of the nascent transcript by cleavage factors such as GreA or GreB allows the resumption of elongation from the new 3'terminus. GreA releases sequences of 2 to 3 nucleotides. The sequence is that of Transcription elongation factor GreA from Clostridium botulinum (strain Okra / Type B1).